Consider the following 767-residue polypeptide: ATP-dependent rRNA helicase SPB4 (767 aa).

A Q motif motif is present at residues 28 to 56; that stretch reads WTKLTPPLTPWVVSLLSDLGFGQMTPVQA. The region spanning 59-291 is the Helicase ATP-binding domain; the sequence is IPLFVSHKDV…RIGLRNPVRV (233 aa). Residue 72-79 coordinates ATP; sequence AVTGSGKT. The tract at residues 132 to 176 is disordered; it reads HVQAQQQQDQDEQDEQDEQEAQSDSDTDPDASTALNNKRKSSNHL. The segment covering 140–160 has biased composition (acidic residues); sequence DQDEQDEQDEQEAQSDSDTDP. A DEAD box motif is present at residues 239–242; that stretch reads DEAD. The region spanning 330–507 is the Helicase C-terminal domain; it reads QLARIVLFES…ILEPAEDDAS (178 aa). The tract at residues 609 to 767 is disordered; it reads KLSGDQAKPP…NADAEPFFVI (159 aa). Composition is skewed to basic and acidic residues over residues 636–645 and 659–681; these read CDSHDSDDAH and LERE…ANRE. Residues 654–746 adopt a coiled-coil conformation; sequence KNKRKLEREK…RANSDNDDAM (93 aa). Positions 690–700 are enriched in polar residues; that stretch reads LKTQAAESSSN. The span at 701-746 shows a compositional bias: basic and acidic residues; the sequence is AKHEPPQDDHDEHDWNDDYRKLQKDKRQQRQRNKADRANSDNDDAM. Positions 749-761 are enriched in low complexity; it reads NSDSDAAAANADA.

The protein belongs to the DEAD box helicase family. DDX55/SPB4 subfamily. In terms of assembly, component of pre-60S ribosomal complexes.

It localises to the nucleus. It is found in the nucleolus. It catalyses the reaction ATP + H2O = ADP + phosphate + H(+). Functionally, ATP-binding RNA helicase involved in the biogenesis of 60S ribosomal subunits. Binds 90S pre-ribosomal particles and dissociates from pre-60S ribosomal particles after processing of 27SB pre-rRNA. Required for the normal formation of 18S rRNA through the processing of pre-rRNAs at sites A0, A1 and A2, and the normal formation of 25S and 5.8S rRNAs through the processing of pre-rRNAs at sites C1 and C2. In Mycosarcoma maydis (Corn smut fungus), this protein is ATP-dependent rRNA helicase SPB4.